The following is a 453-amino-acid chain: Midnolin-A (453 aa).

The Ubiquitin-like domain occupies 20 to 94 (MNLNIQSTTG…LTLLPSVEAG (75 aa)). 4 disordered regions span residues 184-219 (SHLASCTPGPTPPTTLSPTSSTHCNGPHSSPLTTSV), 232-256 (CAEQAPCSTRGTEGTSSSPSSRSRK), 333-376 (RNAK…ENRA), and 390-429 (QKRLRRKARRDSRAPYHWMPTRKSSRTSSNSSTSSGEGSL). Polar residues predominate over residues 206 to 219 (HCNGPHSSPLTTSV). Composition is skewed to low complexity over residues 239 to 252 (STRGTEGTSSSPSS) and 338 to 351 (TSPQSTSPQQTTHP). Positions 365–376 (SGDRLRQTENRA) are enriched in basic and acidic residues. The segment covering 390-399 (QKRLRRKARR) has biased composition (basic residues). Low complexity predominate over residues 415 to 428 (RTSSNSSTSSGEGS).

The protein localises to the nucleus. The protein resides in the cytoplasm. It is found in the cytosol. It localises to the nucleolus. Facilitates ubiquitin-independent proteasomal degradation of polycomb protein CBX4. Plays a role in inhibiting the activity of glucokinase GCK and both glucose-induced and basal insulin secretion. The polypeptide is Midnolin-A (midn-a) (Xenopus laevis (African clawed frog)).